The primary structure comprises 148 residues: uncharacterized protein (148 aa).

The N-terminal stretch at 1-16 (MDVLFIALLVAPLILG) is a signal peptide. Asn50 carries N-linked (GlcNAc...) asparagine glycosylation. The segment at 91–125 (MDPQNPVTTKPVTTEPVTTEPVTTEPQSPNQNDAM) is disordered. Residues 96–116 (PVTTKPVTTEPVTTEPVTTEP) show a composition bias toward low complexity.

The protein localises to the secreted. This is an uncharacterized protein from Mus musculus (Mouse).